Reading from the N-terminus, the 280-residue chain is NAD(P)H-quinone oxidoreductase subunit K, chloroplastic (280 aa).

Residues cysteine 65, cysteine 66, cysteine 130, and cysteine 161 each contribute to the [4Fe-4S] cluster site. The tract at residues 257–280 is disordered; sequence LLKDWKQSNQKQEQNVKMMKEEEA.

Belongs to the complex I 20 kDa subunit family. NDH is composed of at least 16 different subunits, 5 of which are encoded in the nucleus. [4Fe-4S] cluster serves as cofactor.

Its subcellular location is the plastid. The protein resides in the chloroplast thylakoid membrane. It catalyses the reaction a plastoquinone + NADH + (n+1) H(+)(in) = a plastoquinol + NAD(+) + n H(+)(out). The enzyme catalyses a plastoquinone + NADPH + (n+1) H(+)(in) = a plastoquinol + NADP(+) + n H(+)(out). Functionally, NDH shuttles electrons from NAD(P)H:plastoquinone, via FMN and iron-sulfur (Fe-S) centers, to quinones in the photosynthetic chain and possibly in a chloroplast respiratory chain. The immediate electron acceptor for the enzyme in this species is believed to be plastoquinone. Couples the redox reaction to proton translocation, and thus conserves the redox energy in a proton gradient. The polypeptide is NAD(P)H-quinone oxidoreductase subunit K, chloroplastic (Staurastrum punctulatum (Green alga)).